The sequence spans 84 residues: Small ribosomal subunit protein uS17 (84 aa).

The protein belongs to the universal ribosomal protein uS17 family. As to quaternary structure, part of the 30S ribosomal subunit.

In terms of biological role, one of the primary rRNA binding proteins, it binds specifically to the 5'-end of 16S ribosomal RNA. This chain is Small ribosomal subunit protein uS17, found in Histophilus somni (strain 129Pt) (Haemophilus somnus).